Here is a 282-residue protein sequence, read N- to C-terminus: Pantothenate synthetase (282 aa).

31-38 (MGALHDGH) contributes to the ATP binding site. His-38 acts as the Proton donor in catalysis. Residue Gln-62 coordinates (R)-pantoate. Beta-alanine is bound at residue Gln-62. 148–151 (GKKD) is an ATP binding site. Residue Gln-154 participates in (R)-pantoate binding. Residues Val-177 and 185 to 188 (KSSR) each bind ATP.

This sequence belongs to the pantothenate synthetase family. In terms of assembly, homodimer.

It is found in the cytoplasm. The catalysed reaction is (R)-pantoate + beta-alanine + ATP = (R)-pantothenate + AMP + diphosphate + H(+). The protein operates within cofactor biosynthesis; (R)-pantothenate biosynthesis; (R)-pantothenate from (R)-pantoate and beta-alanine: step 1/1. In terms of biological role, catalyzes the condensation of pantoate with beta-alanine in an ATP-dependent reaction via a pantoyl-adenylate intermediate. The chain is Pantothenate synthetase from Staphylococcus saprophyticus subsp. saprophyticus (strain ATCC 15305 / DSM 20229 / NCIMB 8711 / NCTC 7292 / S-41).